We begin with the raw amino-acid sequence, 88 residues long: Small ribosomal subunit protein bS16 (88 aa).

The protein belongs to the bacterial ribosomal protein bS16 family.

The sequence is that of Small ribosomal subunit protein bS16 from Staphylococcus saprophyticus subsp. saprophyticus (strain ATCC 15305 / DSM 20229 / NCIMB 8711 / NCTC 7292 / S-41).